A 65-amino-acid polypeptide reads, in one-letter code: MAVQTPRQRLANAKFNKNNEKYRKYGKKKEGKTEKTAPVISKTWLGILLFLLVGGGVLQLISYIL.

Residues 45-65 (LGILLFLLVGGGVLQLISYIL) traverse the membrane as a helical segment.

This sequence belongs to the RAMP4 family.

Its subcellular location is the membrane. It is found in the endoplasmic reticulum membrane. In terms of biological role, interacts with target proteins during their translocation into the lumen of the endoplasmic reticulum. Protects unfolded target proteins against degradation during ER stress. May facilitate glycosylation of target proteins after termination of ER stress. The protein is Protein YSY6 (YSY6) of Saccharomyces cerevisiae (strain ATCC 204508 / S288c) (Baker's yeast).